The chain runs to 21 residues: Hemocyanin subunit 1 (21 aa).

Belongs to the tyrosinase family. Hemocyanin subfamily. As to expression, hemolymph.

It localises to the secreted. The protein localises to the extracellular space. Functionally, hemocyanins are copper-containing oxygen carriers occurring freely dissolved in the hemolymph of many mollusks and arthropods. This is Hemocyanin subunit 1 from Maja squinado (Mediterranean spider crab).